Consider the following 336-residue polypeptide: Fructose-1,6-bisphosphatase class 1 (336 aa).

Glu90, Asp112, Leu114, and Asp115 together coordinate Mg(2+). Residues Asp115–Ser118, Asn211, and Lys277 each bind substrate. Glu283 is a binding site for Mg(2+).

It belongs to the FBPase class 1 family. In terms of assembly, homotetramer. It depends on Mg(2+) as a cofactor.

The protein resides in the cytoplasm. The catalysed reaction is beta-D-fructose 1,6-bisphosphate + H2O = beta-D-fructose 6-phosphate + phosphate. It functions in the pathway carbohydrate biosynthesis; gluconeogenesis. This Pseudomonas syringae pv. syringae (strain B728a) protein is Fructose-1,6-bisphosphatase class 1.